The sequence spans 39 residues: Photosystem II reaction center protein J (39 aa).

The chain crosses the membrane as a helical span at residues 9-29 (LWLVGLVGGLAVITMLGLFIY).

This sequence belongs to the PsbJ family. PSII is composed of 1 copy each of membrane proteins PsbA, PsbB, PsbC, PsbD, PsbE, PsbF, PsbH, PsbI, PsbJ, PsbK, PsbL, PsbM, PsbT, PsbX, PsbY, PsbZ, Psb30/Ycf12, at least 3 peripheral proteins of the oxygen-evolving complex and a large number of cofactors. It forms dimeric complexes.

The protein localises to the plastid. It localises to the chloroplast thylakoid membrane. Functionally, one of the components of the core complex of photosystem II (PSII). PSII is a light-driven water:plastoquinone oxidoreductase that uses light energy to abstract electrons from H(2)O, generating O(2) and a proton gradient subsequently used for ATP formation. It consists of a core antenna complex that captures photons, and an electron transfer chain that converts photonic excitation into a charge separation. The sequence is that of Photosystem II reaction center protein J from Phaeodactylum tricornutum (strain CCAP 1055/1).